The sequence spans 4244 residues: Tenascin-X (4244 aa).

The first 23 residues, 1–23 (MMPAQYALTSSLVLLVLLSTARA), serve as a signal peptide directing secretion. Residues 27 to 57 (SSRSNVTLPAPRPPPQPGGHTVGAGVGSPSS) are disordered. N-linked (GlcNAc...) asparagine glycosylation occurs at asparagine 31. The 13-residue stretch at 156-168 (CSCEPGWGGPTCS) folds into the EGF-like 1; incomplete domain. The tract at residues 169–189 (DPTDAEIPPSSPPSASGSCPD) is disordered. 18 consecutive EGF-like domains span residues 183 to 213 (ASGSCPDDCNDQGRCVRGRCVCFPGYTGPSC), 214 to 244 (GWPSCPGDCQGRGRCVQGVCVCRAGFSGPDC), 245 to 275 (SQRSCPRGCSQRGRCEGGRCVCDPGYTGDDC), 276 to 306 (GMRSCPRGCSQRGRCENGRCVCNPGYTGEDC), 307 to 337 (GVRSCPRGCSQRGRCKDGRCVCDPGYTGEDC), 338 to 368 (GTRSCPWDCGEGGRCVDGRCVCWPGYTGEDC), 369 to 399 (STRTCPRDCRGRGRCEDGECICDTGYSGDDC), 400 to 430 (GVRSCPGDCNQRGRCEDGRCVCWPGYTGTDC), 431 to 461 (GSRACPRDCRGRGRCENGVCVCNAGYSGEDC), 462 to 492 (GVRSCPGDCRGRGRCESGRCMCWPGYTGRDC), 493 to 523 (GTRACPGDCRGRGRCVDGRCVCNPGFTGEDC), 524 to 554 (GSRRCPGDCRGHGLCEDGVCVCDAGYSGEDC), 555 to 585 (STRSCPGGCRGRGQCLDGRCVCEDGYSGEDC), 586 to 616 (GVRQCPNDCSQHGVCQDGVCICWEGYVSEDC), 617 to 647 (SIRTCPSNCHGRGRCEEGRCLCDPGYTGPTC), 648 to 679 (ATRMCPADCRGRGRCVQGVCLCHVGYGGEDCG), 684 to 714 (PASACPGGCGPRELCRAGQCVCVEGFRGPDC), and 715 to 746 (AIQTCPGDCRGRGECHDGSCVCKDGYAGEDCG). 54 disulfides stabilise this stretch: cysteine 187/cysteine 197, cysteine 191/cysteine 202, cysteine 204/cysteine 213, cysteine 218/cysteine 228, cysteine 222/cysteine 233, cysteine 235/cysteine 244, cysteine 249/cysteine 259, cysteine 253/cysteine 264, cysteine 266/cysteine 275, cysteine 280/cysteine 290, cysteine 284/cysteine 295, cysteine 297/cysteine 306, cysteine 311/cysteine 321, cysteine 315/cysteine 326, cysteine 328/cysteine 337, cysteine 342/cysteine 352, cysteine 346/cysteine 357, cysteine 359/cysteine 368, cysteine 373/cysteine 383, cysteine 377/cysteine 388, cysteine 390/cysteine 399, cysteine 404/cysteine 414, cysteine 408/cysteine 419, cysteine 421/cysteine 430, cysteine 435/cysteine 445, cysteine 439/cysteine 450, cysteine 452/cysteine 461, cysteine 466/cysteine 476, cysteine 470/cysteine 481, cysteine 483/cysteine 492, cysteine 497/cysteine 507, cysteine 501/cysteine 512, cysteine 514/cysteine 523, cysteine 528/cysteine 538, cysteine 532/cysteine 543, cysteine 545/cysteine 554, cysteine 559/cysteine 569, cysteine 563/cysteine 574, cysteine 576/cysteine 585, cysteine 590/cysteine 600, cysteine 594/cysteine 605, cysteine 607/cysteine 616, cysteine 621/cysteine 631, cysteine 625/cysteine 636, cysteine 638/cysteine 647, cysteine 652/cysteine 662, cysteine 656/cysteine 667, cysteine 669/cysteine 678, cysteine 688/cysteine 698, cysteine 692/cysteine 703, cysteine 705/cysteine 714, cysteine 719/cysteine 729, cysteine 723/cysteine 734, and cysteine 736/cysteine 745. Positions 926–956 (TGSSPLGLLGTTDEPPPSGPSTTQGAQAPLL) are disordered. 10 Fibronectin type-III domains span residues 959–1051 (RPQE…IMDK), 1064–1153 (RLGE…PQSD), 1161–1249 (HLGN…APER), 1263–1352 (LLGE…PQED), 1374–1468 (LLGE…TPPA), 1476–1572 (RLGE…TEAS), 1574–1669 (PPLE…RGDA), 1674–1764 (PPRL…ARSA), 1778–1868 (LGEE…REET), and 1883–1971 (HLGE…VPEE). The disordered stretch occupies residues 1340–1372 (PESVVAKTAPQEDVDETPSPTELGTEAPESPEE). The short motif at 1666–1668 (RGD) is the Cell attachment site element. The tract at residues 1752–1777 (PLTADGTTEARSAMDDTGTKRPPKPR) is disordered. The segment at 1968–1990 (VPEEEKPSEPPTATPEPPIKPRL) is disordered. The span at 1976–1987 (EPPTATPEPPIK) shows a compositional bias: pro residues. 5 consecutive Fibronectin type-III domains span residues 1989–2089 (RLGE…SMEA), 2097–2185 (LLGE…APEE), 2196–2296 (RLGQ…TEPP), 2305–2398 (RLEE…TPSP), and 2408–2502 (PPEE…PQED). The interval 2281-2304 (APGKDEEMAPASTEPPTPEPPIKP) is disordered. The segment at 2495-2542 (GVTAPQEDVDETPSPTEPGTEAPGPPEEPLLGELTVTGSSPDSLSLSW) is disordered. A compositionally biased stretch (low complexity) spans 2506–2516 (TPSPTEPGTEA). Fibronectin type-III domains follow at residues 2519–2617 (PPEE…TTQA), 2625–2723 (PPIK…TPSP), 2733–2840 (PPEE…TTPE), 2841–2939 (PPNK…TPAP), 2949–3042 (PPEE…APKD), 3062–3153 (RLGE…TPSP), 3168–3260 (LLGE…TPLP), 3264–3355 (RLGE…TKPS), 3357–3446 (RLGE…PLEK), 3451–3544 (HLGE…TPAP), 3553–3647 (PPEE…LAPA), 3657–3754 (RLSQ…TLSP), 3758–3847 (SPRD…VPDG), 3848–3934 (PTQL…TGLE), and 3935–4025 (APRD…LRIP). A compositionally biased stretch (polar residues) spans 2530-2542 (VTGSSPDSLSLSW). Disordered regions lie at residues 2824–2847 (PEDEAETTQAVPTTTPEPPNKPRL) and 2933–2969 (EEETPAPTEPSTEAPEPPEEPLLGELTVTGSSPDSLS). The span at 2937–2946 (PAPTEPSTEA) shows a compositional bias: low complexity. Polar residues predominate over residues 2960 to 2969 (VTGSSPDSLS). Disordered stretches follow at residues 3536 to 3559 (APEEDTPAPELAPEAPEPPEEPRL) and 3636 to 3662 (LSAEGTTGLAPAGQTSEESRPRLSQLS). Asparagine 3855, asparagine 3908, and asparagine 3920 each carry an N-linked (GlcNAc...) asparagine glycan. The region spanning 4021–4236 (GLRIPFPRDC…FTEMKLRPRN (216 aa)) is the Fibrinogen C-terminal domain. Residues cysteine 4030 and cysteine 4060 are joined by a disulfide bond. N-linked (GlcNAc...) asparagine glycosylation occurs at asparagine 4095. Cysteine 4182 and cysteine 4195 are joined by a disulfide.

It belongs to the tenascin family. Homotrimer. Interacts with type I, III and V collagens and tropoelastin via its 29th fibronectin type-III domain. As to expression, highly expressed in fetal adrenal, in fetal testis, fetal smooth, striated and cardiac muscle. Isoform XB-short is only expressed in the adrenal gland.

It localises to the secreted. The protein localises to the extracellular space. The protein resides in the extracellular matrix. Appears to mediate interactions between cells and the extracellular matrix. Substrate-adhesion molecule that appears to inhibit cell migration. Accelerates collagen fibril formation. May play a role in supporting the growth of epithelial tumors. This Homo sapiens (Human) protein is Tenascin-X.